Here is a 497-residue protein sequence, read N- to C-terminus: MAEEDLRRTRLEKAEQWRVHNQNPYPYRYERTHMAGDLQAKYKDLENGQEVEDAVSVAGRIVARRVLGSVAFFGLQDDSGTIQLYFDKKRIRESMGADAFKWLDKLTDTGDFIGAHGTIRRTERGELSVYVHEYELLCKSILPLPSEYYGLTDVQKRYRQRYLDLIANPGVRETFRKRALIVREIRRFLDERGFLEIETPVLQTEAGGAAARPFTTHHNALGLDMFLRIATELHLKRLVVGGFEKVYELGRIFRNEGISTRHNPEFTTVEIYEAYSDYFDIMDLVETLLRAVAHIVLGSTELVCEGNTIDLGAPFRRITMFDLVAQMTGVALAGLRDGEKAARLAEAVGVEVTAGASVGQILYQLFEEKCEAKLTQPTFVLDYPVEISPLAKAHRSVPNMVERFELYINGRETADGFSELNDPVDQRARLEAQAKAKAAGDLEAHPFDEDFLTAIEHGLPPTGGVGIGIDRLVMLLTDSPSIRDVIAFPTLRPEAGE.

Positions 405 and 412 each coordinate Mg(2+).

It belongs to the class-II aminoacyl-tRNA synthetase family. As to quaternary structure, homodimer. The cofactor is Mg(2+).

The protein localises to the cytoplasm. It carries out the reaction tRNA(Lys) + L-lysine + ATP = L-lysyl-tRNA(Lys) + AMP + diphosphate. The polypeptide is Lysine--tRNA ligase (Gloeobacter violaceus (strain ATCC 29082 / PCC 7421)).